The chain runs to 572 residues: Transmembrane glycoprotein NMB (572 aa).

The first 22 residues, 1-22 (MESLCGVLVFLLLAAGLPLQAA), serve as a signal peptide directing secretion. The Extracellular segment spans residues 23-500 (KRFRDVLGHE…DLGSPLRTVN (478 aa)). N-linked (GlcNAc...) asparagine glycosylation is found at N93, N134, N200, N249, N275, N296, N300, N306, and N312. Residues 251–338 (SDETFLRDLP…SPSSSTSPSP (88 aa)) form the PKD domain. The interval 321-359 (GPCPSPTPSPSSSTSPSPASSPSPTLSTPSPSLMPTGHK) is disordered. Residues 330–356 (PSSSTSPSPASSPSPTLSTPSPSLMPT) show a composition bias toward low complexity. N-linked (GlcNAc...) asparagine glycosylation is found at N461 and N469. A helical membrane pass occupies residues 501–521 (GVLISIGCLAMFVTMVTILLY). The Cytoplasmic segment spans residues 522 to 572 (KKHKTYKPIGNCTRNVVKGKGLSVFLSHAKAPFSRGDREKDPLLQDKPWML). Residue S544 is modified to Phosphoserine. Positions 556-558 (RGD) match the Cell attachment site motif.

This sequence belongs to the PMEL/NMB family.

It is found in the cell membrane. The protein localises to the melanosome membrane. It localises to the early endosome membrane. Could be a melanogenic enzyme. The sequence is that of Transmembrane glycoprotein NMB (Gpnmb) from Rattus norvegicus (Rat).